We begin with the raw amino-acid sequence, 803 residues long: Phenylalanine--tRNA ligase beta subunit (803 aa).

One can recognise a tRNA-binding domain in the interval 39–152; that stretch reads TPGFQKVVAG…PDASPGADAA (114 aa). Residues 406 to 480 form the B5 domain; the sequence is RQPVTIELRP…RLYGYNRIPV (75 aa). Positions 458, 464, 467, and 468 each coordinate Mg(2+). The FDX-ACB domain occupies 709-802; the sequence is PRFPAVERDL…LEERLGASLR (94 aa).

The protein belongs to the phenylalanyl-tRNA synthetase beta subunit family. Type 1 subfamily. Tetramer of two alpha and two beta subunits. Mg(2+) is required as a cofactor.

The protein localises to the cytoplasm. It carries out the reaction tRNA(Phe) + L-phenylalanine + ATP = L-phenylalanyl-tRNA(Phe) + AMP + diphosphate + H(+). This Moorella thermoacetica (strain ATCC 39073 / JCM 9320) protein is Phenylalanine--tRNA ligase beta subunit.